The following is a 547-amino-acid chain: Glucose-6-phosphate isomerase (547 aa).

Catalysis depends on Glu354, which acts as the Proton donor. Catalysis depends on residues His385 and Lys513.

This sequence belongs to the GPI family.

It is found in the cytoplasm. It catalyses the reaction alpha-D-glucose 6-phosphate = beta-D-fructose 6-phosphate. The protein operates within carbohydrate biosynthesis; gluconeogenesis. It participates in carbohydrate degradation; glycolysis; D-glyceraldehyde 3-phosphate and glycerone phosphate from D-glucose: step 2/4. Its function is as follows. Catalyzes the reversible isomerization of glucose-6-phosphate to fructose-6-phosphate. The protein is Glucose-6-phosphate isomerase of Erwinia tasmaniensis (strain DSM 17950 / CFBP 7177 / CIP 109463 / NCPPB 4357 / Et1/99).